The following is a 624-amino-acid chain: Chaperone protein HtpG (624 aa).

Residues 1-336 are a; substrate-binding; it reads MKGQETRGFQ…SSDLPLNVSR (336 aa). A b region spans residues 337–552; the sequence is EILQDSTVTR…ADEMSTQMAK (216 aa). Residues 553–624 are c; sequence LFAAAGQKVP…IRRMNQLLVS (72 aa).

It belongs to the heat shock protein 90 family. As to quaternary structure, homodimer.

Its subcellular location is the cytoplasm. Molecular chaperone. Has ATPase activity. In Escherichia coli O1:K1 / APEC, this protein is Chaperone protein HtpG.